Reading from the N-terminus, the 331-residue chain is 5-dehydro-2-deoxygluconokinase (331 aa).

Belongs to the carbohydrate kinase PfkB family.

It carries out the reaction 5-dehydro-2-deoxy-D-gluconate + ATP = 6-phospho-5-dehydro-2-deoxy-D-gluconate + ADP + H(+). Its pathway is polyol metabolism; myo-inositol degradation into acetyl-CoA; acetyl-CoA from myo-inositol: step 5/7. Its function is as follows. Catalyzes the phosphorylation of 5-dehydro-2-deoxy-D-gluconate (2-deoxy-5-keto-D-gluconate or DKG) to 6-phospho-5-dehydro-2-deoxy-D-gluconate (DKGP). In Halalkalibacterium halodurans (strain ATCC BAA-125 / DSM 18197 / FERM 7344 / JCM 9153 / C-125) (Bacillus halodurans), this protein is 5-dehydro-2-deoxygluconokinase.